Here is a 636-residue protein sequence, read N- to C-terminus: Chaperone protein DnaK (636 aa).

A Phosphothreonine; by autocatalysis modification is found at Thr203. The tract at residues 602-636 is disordered; that stretch reads VYGKQQEGAPAQEEPSAEGKKADDEGTVEGEFREV. A compositionally biased stretch (basic and acidic residues) spans 618–636; the sequence is AEGKKADDEGTVEGEFREV.

The protein belongs to the heat shock protein 70 family.

Functionally, acts as a chaperone. The polypeptide is Chaperone protein DnaK (Dehalococcoides mccartyi (strain ATCC BAA-2100 / JCM 16839 / KCTC 5957 / BAV1)).